We begin with the raw amino-acid sequence, 170 residues long: Probable T4-type lysozyme 2 (170 aa).

Residue E13 is the Proton donor of the active site. Residue D22 is the Nucleophile of the active site.

This sequence belongs to the glycosyl hydrolase 24 family.

It catalyses the reaction Hydrolysis of (1-&gt;4)-beta-linkages between N-acetylmuramic acid and N-acetyl-D-glucosamine residues in a peptidoglycan and between N-acetyl-D-glucosamine residues in chitodextrins.. In Dictyostelium discoideum (Social amoeba), this protein is Probable T4-type lysozyme 2.